Reading from the N-terminus, the 429-residue chain is Endo-beta-1,4-galactanase (429 aa).

Residues 1 to 21 (MKSKVKMFFAAAIVWSACSST) form the signal peptide. Residue 146–149 (DPAK) coordinates substrate. The Proton donor role is filled by Glu-194. Substrate is bound by residues 233–234 (TN) and His-267. Residue Glu-292 is the Nucleophile of the active site. A substrate-binding site is contributed by Thr-296. Residues Asp-301, Asp-303, His-305, and Asn-307 each coordinate Ca(2+). Substrate is bound by residues Lys-311 and Asp-388. Residues Ser-396 and Asp-399 each contribute to the Ca(2+) site.

This sequence belongs to the glycosyl hydrolase 53 family. Ca(2+) serves as cofactor.

The protein resides in the secreted. It catalyses the reaction The enzyme specifically hydrolyzes (1-&gt;4)-beta-D-galactosidic linkages in type I arabinogalactans.. In terms of biological role, involved in galactan degradation. Degrades arabinose-free galactan to galactooligosaccharides, producing galactotetraose as the main product along with galactotriose, galactobiose, and galactose. Is also able to degrade galactotetraose, galactotriose and galactobiose, suggesting an additional exo-mode of activity. May hydrolyze the beta-1,4-galactan linkages of the galactan portion of arabinogalactan type I, a pectic plant polysaccharide from which most of the arabinose has been removed. In Bacillus subtilis (strain 168), this protein is Endo-beta-1,4-galactanase.